Consider the following 166-residue polypeptide: MSDQERETEEDEGGDPSDTAPMLPQRLPDHQASDLMSPGWASLAARGLGTLLFQGWALARLLLHLLLPAAVFLLVLLPAAAVVYLGFLCHSRVHPAPRPACRALLSDRGSAAVIVLGFLSLPPLLVLASAARARLARRLHSLLPPPTWSPGPHRQSDGEKQLCAWV.

Residues 1–15 (MSDQERETEEDEGGD) show a composition bias toward acidic residues. The tract at residues 1-28 (MSDQERETEEDEGGDPSDTAPMLPQRLP) is disordered. 3 helical membrane passes run 39–59 (GWAS…WALA), 65–85 (LLLP…VVYL), and 111–131 (AAVI…ASAA).

It belongs to the TMEM88 family.

The protein resides in the membrane. The chain is Transmembrane protein 278 (TMEM278) from Bos taurus (Bovine).